The sequence spans 131 residues: Small ribosomal subunit protein bS6 (131 aa).

The tract at residues 100–131 (SPMVKAKDERRSRDYSLEDANMDAEEAGDSEE) is disordered. Basic and acidic residues predominate over residues 104–115 (KAKDERRSRDYS). Residues 119–131 (ANMDAEEAGDSEE) show a composition bias toward acidic residues.

It belongs to the bacterial ribosomal protein bS6 family.

Functionally, binds together with bS18 to 16S ribosomal RNA. The sequence is that of Small ribosomal subunit protein bS6 from Photorhabdus laumondii subsp. laumondii (strain DSM 15139 / CIP 105565 / TT01) (Photorhabdus luminescens subsp. laumondii).